A 273-amino-acid polypeptide reads, in one-letter code: Ethanolamine ammonia-lyase small subunit (273 aa).

The adenosylcob(III)alamin site is built by Val-164, Glu-185, and Cys-214.

Belongs to the EutC family. The basic unit is a heterodimer which dimerizes to form tetramers. The heterotetramers trimerize; 6 large subunits form a core ring with 6 small subunits projecting outwards. The cofactor is adenosylcob(III)alamin.

Its subcellular location is the bacterial microcompartment. The enzyme catalyses ethanolamine = acetaldehyde + NH4(+). Its pathway is amine and polyamine degradation; ethanolamine degradation. Catalyzes the deamination of various vicinal amino-alcohols to oxo compounds. Allows this organism to utilize ethanolamine as the sole source of nitrogen and carbon in the presence of external vitamin B12. The protein is Ethanolamine ammonia-lyase small subunit of Pseudomonas paraeruginosa (strain DSM 24068 / PA7) (Pseudomonas aeruginosa (strain PA7)).